A 619-amino-acid polypeptide reads, in one-letter code: Dihydroxy-acid dehydratase (619 aa).

Position 81 (Asp-81) interacts with Mg(2+). Residue Cys-122 participates in [2Fe-2S] cluster binding. The Mg(2+) site is built by Asp-123 and Lys-124. Lys-124 bears the N6-carboxylysine mark. Cys-195 is a [2Fe-2S] cluster binding site. Glu-494 contacts Mg(2+). The active-site Proton acceptor is Ser-520.

The protein belongs to the IlvD/Edd family. In terms of assembly, homodimer. Requires [2Fe-2S] cluster as cofactor. Mg(2+) serves as cofactor.

The enzyme catalyses (2R)-2,3-dihydroxy-3-methylbutanoate = 3-methyl-2-oxobutanoate + H2O. It catalyses the reaction (2R,3R)-2,3-dihydroxy-3-methylpentanoate = (S)-3-methyl-2-oxopentanoate + H2O. The protein operates within amino-acid biosynthesis; L-isoleucine biosynthesis; L-isoleucine from 2-oxobutanoate: step 3/4. It functions in the pathway amino-acid biosynthesis; L-valine biosynthesis; L-valine from pyruvate: step 3/4. Its function is as follows. Functions in the biosynthesis of branched-chain amino acids. Catalyzes the dehydration of (2R,3R)-2,3-dihydroxy-3-methylpentanoate (2,3-dihydroxy-3-methylvalerate) into 2-oxo-3-methylpentanoate (2-oxo-3-methylvalerate) and of (2R)-2,3-dihydroxy-3-methylbutanoate (2,3-dihydroxyisovalerate) into 2-oxo-3-methylbutanoate (2-oxoisovalerate), the penultimate precursor to L-isoleucine and L-valine, respectively. The polypeptide is Dihydroxy-acid dehydratase (Shewanella putrefaciens (strain CN-32 / ATCC BAA-453)).